A 360-amino-acid polypeptide reads, in one-letter code: Peptide chain release factor 1 (360 aa).

Gln237 is modified (N5-methylglutamine).

Belongs to the prokaryotic/mitochondrial release factor family. In terms of processing, methylated by PrmC. Methylation increases the termination efficiency of RF1.

The protein localises to the cytoplasm. In terms of biological role, peptide chain release factor 1 directs the termination of translation in response to the peptide chain termination codons UAG and UAA. In Teredinibacter turnerae (strain ATCC 39867 / T7901), this protein is Peptide chain release factor 1.